Consider the following 205-residue polypeptide: Inactive ribonuclease-like protein 9 (205 aa).

The signal sequence occupies residues Met1 to Phe26. 2 disulfide bridges follow: Cys116–Cys168 and Cys123–Cys130. Asn131 and Asn143 each carry an N-linked (GlcNAc...) asparagine glycan.

Belongs to the pancreatic ribonuclease family. As to expression, at the mRNA level, widely expressed. At protein level, restricted to epididymis. Expressed in spermatozoa (sperm head and neck), with higher levels on ejaculated and epididymal sperm than on testicular sperm (at protein level). Expressed in the epithelial cells of the epididymal tubule (at protein level). Not detected in muscle.

The protein localises to the secreted. Does not exhibit any ribonuclease activity. The sequence is that of Inactive ribonuclease-like protein 9 (RNASE9) from Homo sapiens (Human).